A 155-amino-acid polypeptide reads, in one-letter code: 6,7-dimethyl-8-ribityllumazine synthase (155 aa).

5-amino-6-(D-ribitylamino)uracil is bound by residues F23, 57–59 (AFE), and 81–83 (AVI). A (2S)-2-hydroxy-3-oxobutyl phosphate-binding site is contributed by 86-87 (ST). H89 (proton donor) is an active-site residue. F114 provides a ligand contact to 5-amino-6-(D-ribitylamino)uracil. R128 serves as a coordination point for (2S)-2-hydroxy-3-oxobutyl phosphate.

The protein belongs to the DMRL synthase family.

The enzyme catalyses (2S)-2-hydroxy-3-oxobutyl phosphate + 5-amino-6-(D-ribitylamino)uracil = 6,7-dimethyl-8-(1-D-ribityl)lumazine + phosphate + 2 H2O + H(+). It functions in the pathway cofactor biosynthesis; riboflavin biosynthesis; riboflavin from 2-hydroxy-3-oxobutyl phosphate and 5-amino-6-(D-ribitylamino)uracil: step 1/2. In terms of biological role, catalyzes the formation of 6,7-dimethyl-8-ribityllumazine by condensation of 5-amino-6-(D-ribitylamino)uracil with 3,4-dihydroxy-2-butanone 4-phosphate. This is the penultimate step in the biosynthesis of riboflavin. This Dehalococcoides mccartyi (strain ATCC BAA-2266 / KCTC 15142 / 195) (Dehalococcoides ethenogenes (strain 195)) protein is 6,7-dimethyl-8-ribityllumazine synthase.